Consider the following 471-residue polypeptide: Ribulose bisphosphate carboxylase large chain (471 aa).

Substrate is bound by residues Asn-115 and Thr-165. Lys-167 functions as the Proton acceptor in the catalytic mechanism. Lys-169 is a substrate binding site. Residues Lys-193, Asp-195, and Glu-196 each coordinate Mg(2+). An N6-carboxylysine modification is found at Lys-193. His-286 acts as the Proton acceptor in catalysis. The substrate site is built by Arg-287, His-319, and Ser-371.

This sequence belongs to the RuBisCO large chain family. Type I subfamily. As to quaternary structure, heterohexadecamer of 8 large chains and 8 small chains. It depends on Mg(2+) as a cofactor.

The protein localises to the carboxysome. It carries out the reaction 2 (2R)-3-phosphoglycerate + 2 H(+) = D-ribulose 1,5-bisphosphate + CO2 + H2O. It catalyses the reaction D-ribulose 1,5-bisphosphate + O2 = 2-phosphoglycolate + (2R)-3-phosphoglycerate + 2 H(+). RuBisCO catalyzes two reactions: the carboxylation of D-ribulose 1,5-bisphosphate, the primary event in carbon dioxide fixation, as well as the oxidative fragmentation of the pentose substrate in the photorespiration process. Both reactions occur simultaneously and in competition at the same active site. This Prochlorococcus marinus (strain MIT 9301) protein is Ribulose bisphosphate carboxylase large chain.